A 396-amino-acid polypeptide reads, in one-letter code: Na(+)/H(+) antiporter NhaA 1 (396 aa).

The next 11 membrane-spanning stretches (helical) occupy residues 18–38 (LLLI…LSWL), 60–80 (LLLW…GLEV), 95–115 (IALP…IYTG), 126–146 (GWAI…ALLG), 155–175 (LFLL…IALF), 178–198 (ADLS…LFIL), 201–221 (TGVT…ICVL), 262–282 (VAYG…LAGI), 295–315 (IAAG…WIGV), 333–353 (GMAV…TLAL), and 362–382 (AARL…YYLL).

It belongs to the NhaA Na(+)/H(+) (TC 2.A.33) antiporter family.

Its subcellular location is the cell inner membrane. It carries out the reaction Na(+)(in) + 2 H(+)(out) = Na(+)(out) + 2 H(+)(in). In terms of biological role, na(+)/H(+) antiporter that extrudes sodium in exchange for external protons. In Syntrophotalea carbinolica (strain DSM 2380 / NBRC 103641 / GraBd1) (Pelobacter carbinolicus), this protein is Na(+)/H(+) antiporter NhaA 1.